Here is a 90-residue protein sequence, read N- to C-terminus: Probable Fe(2+)-trafficking protein (90 aa).

This sequence belongs to the Fe(2+)-trafficking protein family.

Its function is as follows. Could be a mediator in iron transactions between iron acquisition and iron-requiring processes, such as synthesis and/or repair of Fe-S clusters in biosynthetic enzymes. The protein is Probable Fe(2+)-trafficking protein of Nitrosospira multiformis (strain ATCC 25196 / NCIMB 11849 / C 71).